The following is a 428-amino-acid chain: 3-phosphoshikimate 1-carboxyvinyltransferase (428 aa).

Lysine 22, serine 23, and arginine 27 together coordinate 3-phosphoshikimate. Lysine 22 is a phosphoenolpyruvate binding site. Glycine 98 and arginine 126 together coordinate phosphoenolpyruvate. 3-phosphoshikimate-binding residues include serine 172, serine 173, glutamine 174, serine 200, aspartate 316, asparagine 339, and lysine 343. Residue glutamine 174 coordinates phosphoenolpyruvate. The active-site Proton acceptor is the aspartate 316. Arginine 347, arginine 389, and lysine 414 together coordinate phosphoenolpyruvate.

Belongs to the EPSP synthase family. Monomer.

The protein resides in the cytoplasm. It carries out the reaction 3-phosphoshikimate + phosphoenolpyruvate = 5-O-(1-carboxyvinyl)-3-phosphoshikimate + phosphate. The protein operates within metabolic intermediate biosynthesis; chorismate biosynthesis; chorismate from D-erythrose 4-phosphate and phosphoenolpyruvate: step 6/7. In terms of biological role, catalyzes the transfer of the enolpyruvyl moiety of phosphoenolpyruvate (PEP) to the 5-hydroxyl of shikimate-3-phosphate (S3P) to produce enolpyruvyl shikimate-3-phosphate and inorganic phosphate. The sequence is that of 3-phosphoshikimate 1-carboxyvinyltransferase from Psychromonas ingrahamii (strain DSM 17664 / CCUG 51855 / 37).